A 546-amino-acid polypeptide reads, in one-letter code: DDB1- and CUL4-associated factor 11 (546 aa).

Positions 1–19 are enriched in low complexity; that stretch reads MGSRNSSSAGSGSGDPSEG. A disordered region spans residues 1 to 40; sequence MGSRNSSSAGSGSGDPSEGLTRRGAGLRRSEEEEEEDEDV. Ser-75 bears the Phosphoserine mark. 7 WD repeats span residues 170–210, 216–258, 263–302, 305–345, 353–392, 435–480, and 481–520; these read SYSQ…RKFK, DVGW…TALD, ERRF…RTLQ, SHED…EDDP, GHQD…SREG, GVLH…KKLT, and NHKA…YFQD. Residues 523–546 form a disordered region; that stretch reads PESEECASAPAPVPRSSTPFSSPQ. Residues 537–546 are compositionally biased toward polar residues; sequence RSSTPFSSPQ.

Interacts with DDB1 and CUL4A.

Its pathway is protein modification; protein ubiquitination. Its function is as follows. May function as a substrate receptor for CUL4-DDB1 E3 ubiquitin-protein ligase complex. This chain is DDB1- and CUL4-associated factor 11 (DCAF11), found in Pongo abelii (Sumatran orangutan).